The following is a 443-amino-acid chain: EP1-like glycoprotein 4 (443 aa).

The signal sequence occupies residues 1 to 22 (MEFSTTLALFFTLSIFLVGAQA). Residues 29-159 (QFRVVNEGGY…NGKFVWQSFD (131 aa)) form the Bulb-type lectin domain. Asparagine 66, asparagine 102, asparagine 258, and asparagine 269 each carry an N-linked (GlcNAc...) asparagine glycan. The stretch at 254-296 (GSQFNVSTFLSRPKHNATLSFLRLESDGNIRVWSYSTLATSTA) is one WD repeat. A PAN domain is found at 356-433 (CDPKTFHYFK…TSLVAYVKAP (78 aa)). 2 cysteine pairs are disulfide-bonded: cysteine 387/cysteine 409 and cysteine 391/cysteine 397. The N-linked (GlcNAc...) asparagine glycan is linked to asparagine 434.

The protein localises to the secreted. It localises to the cell wall. The polypeptide is EP1-like glycoprotein 4 (Arabidopsis thaliana (Mouse-ear cress)).